Reading from the N-terminus, the 457-residue chain is MPHNSIRSGHGGLNQLGGAFVNGRPLPEVVRQRIVDLAHQGVRPCDISRQLRVSHGCVSKILGRYYETGSIRPGVIGGSKPKVATPKVVEKIGDYKRQNPTMFAWEIRDRLLAEGVCDNDTVPSVSSINRIIRTKVQQPFNLPMDSCVATKSLSPGHTLIPSSAVTPPESPQSDSLGSTYSINGLLGIAQPGSDNKRKMDDSDQDSCRLSIDSQSSSSGPRKHLRTDTFGQHHLEPLECPFERQHYPEAYASPSHTKGEQGLYPLPLLNSTLDDGKATLTPSNTPLGRNLSTHQTYPVVADPHSPYAIKQETPELSSSSSTPSSLSSSAFLDLQQVGSGGPAGASVPPFNAFSHAASVYGQFTGQALLSGREMVGPTLPGYPPHIPTSGQGSYASSAIAGMVAGSEYSGNAYSHTPYASYSEAWRFPNSSLLSSPYYYSSTTRPSAPPTSATAFDHL.

A DNA-binding region (paired) is located at residues 9-135 (GHGGLNQLGG…SSINRIIRTK (127 aa)). Positions 12–68 (GLNQLGGAFVNGRPLPEVVRQRIVDLAHQGVRPCDISRQLRVSHGCVSKILGRYYET) are PAI subdomain. Residues 87-135 (KVVEKIGDYKRQNPTMFAWEIRDRLLAEGVCDNDTVPSVSSINRIIRTK) form an RED subdomain region. Residues 159–182 (LIPSSAVTPPESPQSDSLGSTYSI) show a composition bias toward polar residues. A disordered region spans residues 159–226 (LIPSSAVTPP…SSGPRKHLRT (68 aa)). A Phosphoserine modification is found at Ser304.

In terms of assembly, interacts with WWTR1.

It is found in the nucleus. Functionally, thought to encode a transcription factor. It may have a role in kidney cell differentiation. May play a regulatory role in mammalian development. The sequence is that of Paired box protein Pax-8 (Pax8) from Rattus norvegicus (Rat).